Reading from the N-terminus, the 263-residue chain is Probable 6-oxopurine nucleoside phosphorylase (263 aa).

Phosphate contacts are provided by residues Thr9, 49–50 (RH), and 82–83 (TA). Met181 lines the substrate pocket. Thr182 is a phosphate binding site. 205–207 (NYA) provides a ligand contact to substrate.

The protein belongs to the PNP/MTAP phosphorylase family. MTAP subfamily. As to quaternary structure, homohexamer. Dimer of a homotrimer.

The enzyme catalyses a purine D-ribonucleoside + phosphate = a purine nucleobase + alpha-D-ribose 1-phosphate. The protein operates within purine metabolism; purine nucleoside salvage. In terms of biological role, purine nucleoside phosphorylase which is highly specific for 6-oxopurine nucleosides. Cleaves guanosine or inosine to respective bases and sugar-1-phosphate molecules. Involved in purine salvage. The polypeptide is Probable 6-oxopurine nucleoside phosphorylase (Dictyoglomus turgidum (strain DSM 6724 / Z-1310)).